The primary structure comprises 450 residues: Bifunctional protein GlmU (450 aa).

Residues 1 to 226 (MLAVAVLAAG…PDEVNGINNR (226 aa)) are pyrophosphorylase. Residues 7 to 10 (LAAG), lysine 21, glutamine 73, and 78 to 79 (GT) each bind UDP-N-acetyl-alpha-D-glucosamine. Residue aspartate 103 coordinates Mg(2+). UDP-N-acetyl-alpha-D-glucosamine is bound by residues glycine 140, glutamate 155, asparagine 170, and asparagine 224. Asparagine 224 contributes to the Mg(2+) binding site. Positions 227–247 (QQLAQCETMLQERLRHHWMAE) are linker. The tract at residues 248–450 (GVTFVDPASC…IKENWAGPQG (203 aa)) is N-acetyltransferase. The UDP-N-acetyl-alpha-D-glucosamine site is built by arginine 329 and lysine 347. Histidine 359 (proton acceptor) is an active-site residue. Positions 362 and 373 each coordinate UDP-N-acetyl-alpha-D-glucosamine. Residues alanine 376, 382-383 (NY), alanine 419, and arginine 436 each bind acetyl-CoA.

The protein in the N-terminal section; belongs to the N-acetylglucosamine-1-phosphate uridyltransferase family. In the C-terminal section; belongs to the transferase hexapeptide repeat family. Homotrimer. It depends on Mg(2+) as a cofactor.

Its subcellular location is the cytoplasm. It carries out the reaction alpha-D-glucosamine 1-phosphate + acetyl-CoA = N-acetyl-alpha-D-glucosamine 1-phosphate + CoA + H(+). The enzyme catalyses N-acetyl-alpha-D-glucosamine 1-phosphate + UTP + H(+) = UDP-N-acetyl-alpha-D-glucosamine + diphosphate. It functions in the pathway nucleotide-sugar biosynthesis; UDP-N-acetyl-alpha-D-glucosamine biosynthesis; N-acetyl-alpha-D-glucosamine 1-phosphate from alpha-D-glucosamine 6-phosphate (route II): step 2/2. It participates in nucleotide-sugar biosynthesis; UDP-N-acetyl-alpha-D-glucosamine biosynthesis; UDP-N-acetyl-alpha-D-glucosamine from N-acetyl-alpha-D-glucosamine 1-phosphate: step 1/1. The protein operates within bacterial outer membrane biogenesis; LPS lipid A biosynthesis. In terms of biological role, catalyzes the last two sequential reactions in the de novo biosynthetic pathway for UDP-N-acetylglucosamine (UDP-GlcNAc). The C-terminal domain catalyzes the transfer of acetyl group from acetyl coenzyme A to glucosamine-1-phosphate (GlcN-1-P) to produce N-acetylglucosamine-1-phosphate (GlcNAc-1-P), which is converted into UDP-GlcNAc by the transfer of uridine 5-monophosphate (from uridine 5-triphosphate), a reaction catalyzed by the N-terminal domain. The chain is Bifunctional protein GlmU from Synechococcus sp. (strain RCC307).